We begin with the raw amino-acid sequence, 479 residues long: Adenosylhomocysteinase (479 aa).

Residues T66, D142, and E203 each coordinate substrate. Residue 204–206 (TTT) coordinates NAD(+). Residues K233 and D237 each contribute to the substrate site. NAD(+) is bound by residues N238, 267 to 272 (GYGDVG), E290, N325, 346 to 348 (IGH), and N394.

This sequence belongs to the adenosylhomocysteinase family. NAD(+) serves as cofactor.

It is found in the cytoplasm. The enzyme catalyses S-adenosyl-L-homocysteine + H2O = L-homocysteine + adenosine. The protein operates within amino-acid biosynthesis; L-homocysteine biosynthesis; L-homocysteine from S-adenosyl-L-homocysteine: step 1/1. May play a key role in the regulation of the intracellular concentration of adenosylhomocysteine. The chain is Adenosylhomocysteinase from Nitratidesulfovibrio vulgaris (strain DSM 19637 / Miyazaki F) (Desulfovibrio vulgaris).